A 448-amino-acid chain; its full sequence is NADP-specific glutamate dehydrogenase (448 aa).

Substrate-binding residues include K88, Q109, and K112. Catalysis depends on K124, which acts as the Proton donor. G163 contacts substrate. NADP(+) is bound by residues T207 and N238. Position 381 (S381) interacts with substrate.

The protein belongs to the Glu/Leu/Phe/Val dehydrogenases family. Homohexamer.

The catalysed reaction is L-glutamate + NADP(+) + H2O = 2-oxoglutarate + NH4(+) + NADPH + H(+). Catalyzes the reversible oxidative deamination of glutamate to alpha-ketoglutarate and ammonia. The polypeptide is NADP-specific glutamate dehydrogenase (gdhA) (Helicobacter pylori (strain ATCC 700392 / 26695) (Campylobacter pylori)).